A 501-amino-acid chain; its full sequence is Lysine--tRNA ligase (501 aa).

Asp-411 and Glu-418 together coordinate Mg(2+).

It belongs to the class-II aminoacyl-tRNA synthetase family. In terms of assembly, homodimer. The cofactor is Mg(2+).

Its subcellular location is the cytoplasm. The enzyme catalyses tRNA(Lys) + L-lysine + ATP = L-lysyl-tRNA(Lys) + AMP + diphosphate. This is Lysine--tRNA ligase from Mycolicibacterium gilvum (strain PYR-GCK) (Mycobacterium gilvum (strain PYR-GCK)).